Reading from the N-terminus, the 39-residue chain is Photosystem II reaction center protein L (39 aa).

A helical membrane pass occupies residues 18 to 38 (SLYLGLLLVFVLGILFSSYFF).

The protein belongs to the PsbL family. In terms of assembly, PSII is composed of 1 copy each of membrane proteins PsbA, PsbB, PsbC, PsbD, PsbE, PsbF, PsbH, PsbI, PsbJ, PsbK, PsbL, PsbM, PsbT, PsbX, PsbY, PsbZ, Psb30/Ycf12, peripheral proteins PsbO, CyanoQ (PsbQ), PsbU, PsbV and a large number of cofactors. It forms dimeric complexes.

The protein localises to the cellular thylakoid membrane. Its function is as follows. One of the components of the core complex of photosystem II (PSII). PSII is a light-driven water:plastoquinone oxidoreductase that uses light energy to abstract electrons from H(2)O, generating O(2) and a proton gradient subsequently used for ATP formation. It consists of a core antenna complex that captures photons, and an electron transfer chain that converts photonic excitation into a charge separation. This subunit is found at the monomer-monomer interface and is required for correct PSII assembly and/or dimerization. This Trichormus variabilis (strain ATCC 29413 / PCC 7937) (Anabaena variabilis) protein is Photosystem II reaction center protein L.